The following is a 173-amino-acid chain: Atrial gland and califin peptides (173 aa).

A signal peptide spans 1–21 (MKANTMFIILCLSLSTLCVSS). Positions 22 to 34 (QSTSVHGKIFVPN) are excised as a propeptide. An Isoleucine amide modification is found at I69. Positions 73–114 (AAGEMEQSEGQNPETKSHSWRKRSVLTPSLSSLGESLESGIS) are excised as a propeptide. Residues 75-94 (GEMEQSEGQNPETKSHSWRK) form a disordered region. A disulfide bond links C141 and C172. L152 bears the Leucine amide mark.

The protein belongs to the molluscan ELH family. Califin A consists of a 36-residue large subunit bound by a single disulfide bond to a 18-residue small subunit.

It is found in the secreted. The atrial gland peptide A and peptide B precursors are the source of the 2 peptides that, upon release from this reproductive system gland, initiate the egg-laying process by exciting the bag cell neurons. These neurons, clustered in neural connectives near the abdominal ganglion, in turn release other peptides that act directly on the ganglion and also, via the circulating hemolymph, on many other organs to control the physiological processes of egg-laying. One of these other peptides is the egg-laying hormone. In terms of biological role, injected in sexually mature animals califin A excites LB and LC cells of the abdominal ganglion and causes egg-laying. The polypeptide is Atrial gland and califin peptides (Aplysia californica (California sea hare)).